The following is a 491-amino-acid chain: Immediate early protein IE1 (491 aa).

Residues 1–11 show a composition bias toward basic and acidic residues; that stretch reads MESSAKRKMDP. Residues 1–24 form a nuclear localization signal region; it reads MESSAKRKMDPDNPDEGPSSKVPR. Residues 1–30 form a disordered region; that stretch reads MESSAKRKMDPDNPDEGPSSKVPRPETPVT. Residues 132 to 346 are interaction with host PML, interference with PML sumoylation and disruption of PML-associated nuclear bodies; it reads ILDKVHEPFE…SVMKRRIEEI (215 aa). Residues 373–445 form an interaction with host STAT2 region; the sequence is AIAEESDEEE…EEGAQEERED (73 aa). Residues 410 to 420 form a modulation of STAT3/STAT1 signaling region; it reads ATIPLSSVIVA. The interaction with host STAT3 stretch occupies residues 410 to 445; that stretch reads ATIPLSSVIVAENSDQEESEQSDEEEEEGAQEERED. Residues 421–472 are acidic; the sequence is ENSDQEESEQSDEEEEEGAQEEREDTVSVKSEPVSEIEEVAPEEEEDGAEEP. The interval 421-491 is disordered; that stretch reads ENSDQEESEQ…PMVTRSKADQ (71 aa). Residues 423 to 444 show a composition bias toward acidic residues; that stretch reads SDQEESEQSDEEEEEGAQEERE. Residues 449–452 are interaction with host SUMO1; it reads VKSE. Lysine 450 is covalently cross-linked (Glycyl lysine isopeptide (Lys-Gly) (interchain with G-Cter in SUMO)). Residues 455 to 470 show a composition bias toward acidic residues; sequence SEIEEVAPEEEEDGAE. Positions 475-491 are chromosome-tethering domain (CTD), binding to histones; it reads SGGKSTHPMVTRSKADQ.

This sequence belongs to the HHV-5 IE1 protein family. Forms homodimers. Interacts with human p53/TP53; this interaction inhibits p53/TP53-dependent transactivation activity. Interacts with host STAT1. Interacts with host STAT2; this interaction promotes viral growth and counteracts the antiviral interferon response. May also interact with the host STAT1-STAT2 heterodimer. Interacts with host STAT3; this interaction leads to STAT3 nuclear accumulation and disruption of IL6-induced STAT3 phosphorylation. Interacts with host PML; this interaction inhibits host PML de novo sumoylation and probably inhibits PML regulation of type I and type II interferon-induced gene expression. Interacts with host DAXX. Interacts with host SP100. Interacts with host E2F1. Interacts with host RB1. Interacts with host HDAC1; this interaction inhibits histone deacetylation and promotes viral transcription. Interacts with host HDAC2; this interaction inhibits histone deacetylation and promotes viral transcription. Interacts with host HDAC3; this interaction inhibits histone deacetylation and promotes viral transcription. Interacts with host PLSCR1; this interaction inhibits IE1 transactivating activity. In terms of processing, sumoylated by host PML/nuclear domain 10. Sumoylation abolishes the interaction with host STAT2 and thus the IE1-mediated repression of interferon-stimulated genes.

The protein localises to the host nucleus. Functionally, plays an important role in transactivating viral early genes as well as activating its own promoter, probably by altering the viral chromatin structure. Expression of IE1 and IE2 proteins is critical for the establishment of lytic infection and reactivation from viral latency. Disrupts PML-associated ND10 nuclear bodies by interfering with host PML and SP100 sumoylation thereby altering the regulation of type I and type II interferon-induced gene expression. Promotes efficient viral growth by interacting with and directing host SP100 to degradation, leading to enhanced acetylation level of histones. In addition, functions in counteracting the host innate antiviral response. Inhibits the type I interferon pathway by directly interacting with and sequestrating host STAT2. Also targets type II interferon pathway by repressing IL6- and STAT3 target genes. Repression of STAT3 genes is due to STAT3 nuclear accumulation and disruption of IL6-induced STAT3 phosphorylation by IE1. This repression is followed by phosphorylation and activation of STAT1. Inhibits host ISG transcription by sequestering host ISGF3 in a PML- and STAT2- binding dependent manner. Alters host cell cycle progression, probably through its interaction with host E2F1 or RB1 that overcomes the RB1-mediated repression of E2F-responsive promoters. May act as a E3 ubiquitin ligase targeting several host proteins including HES1 and SP100A for ubiquitination and subsequent proteasomal degradation. Impairs the radial migration of immature neurons by downregulating Gap junction alpha-1 protein/GJA1 also via ubiquitination and degradation. In Human cytomegalovirus (strain Towne) (HHV-5), this protein is Immediate early protein IE1 (UL123).